Here is a 115-residue protein sequence, read N- to C-terminus: Large ribosomal subunit protein bL19 (115 aa).

The protein belongs to the bacterial ribosomal protein bL19 family.

Functionally, this protein is located at the 30S-50S ribosomal subunit interface and may play a role in the structure and function of the aminoacyl-tRNA binding site. This Streptococcus equi subsp. zooepidemicus (strain H70) protein is Large ribosomal subunit protein bL19.